Reading from the N-terminus, the 46-residue chain is Large ribosomal subunit protein bL33A (46 aa).

This sequence belongs to the bacterial ribosomal protein bL33 family.

This chain is Large ribosomal subunit protein bL33A, found in Mesomycoplasma hyopneumoniae (strain 7448) (Mycoplasma hyopneumoniae).